Here is an 851-residue protein sequence, read N- to C-terminus: DNA mismatch repair protein MutS (851 aa).

ATP is bound at residue 602–609 (GPNMSGKS).

It belongs to the DNA mismatch repair MutS family.

Its function is as follows. This protein is involved in the repair of mismatches in DNA. It is possible that it carries out the mismatch recognition step. This protein has a weak ATPase activity. This Streptococcus pyogenes serotype M6 (strain ATCC BAA-946 / MGAS10394) protein is DNA mismatch repair protein MutS.